A 222-amino-acid polypeptide reads, in one-letter code: Protein GrpE (222 aa).

The protein belongs to the GrpE family. Homodimer.

It localises to the cytoplasm. Participates actively in the response to hyperosmotic and heat shock by preventing the aggregation of stress-denatured proteins, in association with DnaK and GrpE. It is the nucleotide exchange factor for DnaK and may function as a thermosensor. Unfolded proteins bind initially to DnaJ; upon interaction with the DnaJ-bound protein, DnaK hydrolyzes its bound ATP, resulting in the formation of a stable complex. GrpE releases ADP from DnaK; ATP binding to DnaK triggers the release of the substrate protein, thus completing the reaction cycle. Several rounds of ATP-dependent interactions between DnaJ, DnaK and GrpE are required for fully efficient folding. The sequence is that of Protein GrpE from Bartonella bacilliformis (strain ATCC 35685 / KC583 / Herrer 020/F12,63).